The chain runs to 382 residues: Gap junction alpha-1 protein (382 aa).

Residues 2-23 (GDWSALGKLLDKVQAYSTAGGK) lie on the Cytoplasmic side of the membrane. Ser5 is subject to Phosphoserine. A helical membrane pass occupies residues 24 to 44 (VWLSVLFIFRILLLGTAVESA). At 45–76 (WGDEQSAFRCNTQQPGCENVCYDKSFPISHVR) the chain is on the extracellular side. Disulfide bonds link Cys54–Cys192 and Cys187–Cys198. Residues 77–97 (FWVLQIIFVSVPTLLYLAHVF) traverse the membrane as a helical segment. Residues 98-155 (YVMRKEEKLNKKEEELKVAQTDGVNVDMHLKQIEIKKFKYGIEEHGKVKMRGGLLRTY) lie on the Cytoplasmic side of the membrane. A Glycyl lysine isopeptide (Lys-Gly) (interchain with G-Cter in SUMO) cross-link involves residue Lys144. The chain crosses the membrane as a helical span at residues 156–176 (IISILFKSIFEVAFLLIQWYI). Residues 177-207 (YGFSLSAVYTCKRDPCPHQVDCFLSRPTEKT) are Extracellular-facing. Residues 208–228 (IFIIFMLVVSLVSLALNIIEL) traverse the membrane as a helical segment. Residues 229–382 (FYVFFKGVKD…SRPRPDDLEI (154 aa)) are Cytoplasmic-facing. Lys237 is covalently cross-linked (Glycyl lysine isopeptide (Lys-Gly) (interchain with G-Cter in SUMO)). The interval 244–382 (SDPYHATSGA…SRPRPDDLEI (139 aa)) is interaction with NOV. At Tyr247 the chain carries Phosphotyrosine. Phosphoserine is present on residues Ser255 and Ser262. The tract at residues 264 to 382 (KYAYFNGCSS…SRPRPDDLEI (119 aa)) is interaction with UBQLN4. Cys271 carries the S-nitrosocysteine modification. Thr275 is modified (phosphothreonine). Phosphoserine occurs at positions 306 and 314. Residues 317–332 (QNRMGQAGSTISNSHA) are compositionally biased toward polar residues. Residues 317–382 (QNRMGQAGST…SRPRPDDLEI (66 aa)) are disordered. Ser325 carries the post-translational modification Phosphoserine; by CK1. Residue Thr326 is modified to Phosphothreonine. Residues Ser328 and Ser330 each carry the phosphoserine; by CK1 modification. A phosphoserine mark is found at Ser344 and Ser365. The segment covering 362-374 (RPSSRASSRASSR) has biased composition (low complexity). Ser368 carries the phosphoserine; by PKC/PRKCG and PKC/PRKCD modification. Phosphoserine is present on residues Ser369 and Ser373.

The protein belongs to the connexin family. Alpha-type (group II) subfamily. In terms of assembly, a connexon is composed of a hexamer of connexins. Interacts (via C-terminus) with TJP1. Interacts (via C-terminus) with SRC (via SH3 domain). Interacts (not ubiquitinated) with UBQLN4 (via UBA domain). Interacts with SGSM3 and CNST. Interacts with RIC1/CIP150. Interacts with CSNK1D. Interacts with NOV. Interacts with TMEM65. Interacts with ANK3/ANKG and PKP2. In terms of processing, phosphorylated at Ser-368 by PRKCG; phosphorylation induces disassembly of gap junction plaques and inhibition of gap junction activity. Phosphorylation at Ser-325, Ser-328 and Ser-330 by CK1 modulates gap junction assembly. Phosphorylation at Ser-368 by PRKCD triggers its internalization into small vesicles leading to proteasome-mediated degradation. Post-translationally, sumoylated with SUMO1, SUMO2 and SUMO3, which may regulate the level of functional Cx43 gap junctions at the plasma membrane. May be desumoylated by SENP1 or SENP2. S-nitrosylation at Cys-271 is enriched at the muscle endothelial gap junction in arteries, it augments channel permeability and may regulate of smooth muscle cell to endothelial cell communication. In terms of processing, acetylated in the developing cortex; leading to delocalization from the cell membrane. Expressed at intercalated disks in the heart (at protein level). Expressed in the fetal cochlea.

The protein localises to the cell membrane. It localises to the cell junction. The protein resides in the gap junction. It is found in the endoplasmic reticulum. In terms of biological role, gap junction protein that acts as a regulator of bladder capacity. A gap junction consists of a cluster of closely packed pairs of transmembrane channels, the connexons, through which materials of low MW diffuse from one cell to a neighboring cell. May play a critical role in the physiology of hearing by participating in the recycling of potassium to the cochlear endolymph. Negative regulator of bladder functional capacity: acts by enhancing intercellular electrical and chemical transmission, thus sensitizing bladder muscles to cholinergic neural stimuli and causing them to contract. May play a role in cell growth inhibition through the regulation of NOV expression and localization. Plays an essential role in gap junction communication in the ventricles. This chain is Gap junction alpha-1 protein (GJA1), found in Homo sapiens (Human).